The following is a 126-amino-acid chain: Large ribosomal subunit protein bL12 (126 aa).

It belongs to the bacterial ribosomal protein bL12 family. In terms of assembly, homodimer. Part of the ribosomal stalk of the 50S ribosomal subunit. Forms a multimeric L10(L12)X complex, where L10 forms an elongated spine to which 2 to 4 L12 dimers bind in a sequential fashion. Binds GTP-bound translation factors.

Forms part of the ribosomal stalk which helps the ribosome interact with GTP-bound translation factors. Is thus essential for accurate translation. The protein is Large ribosomal subunit protein bL12 of Bordetella petrii (strain ATCC BAA-461 / DSM 12804 / CCUG 43448).